A 1670-amino-acid chain; its full sequence is Collagen alpha-3(IV) chain (1670 aa).

The N-terminal stretch at 1–28 (MSARTAPRPQVLLLPLLLVLLAAAPAAS) is a signal peptide. The interval 29-42 (KGCVCKDKGQCFCD) is 7S domain. The tract at residues 43–1438 (GAKGEKGEKG…KGKRGDSGSP (1396 aa)) is triple-helical region. Disordered regions lie at residues 49-78 (GEKGFPGPPGSPGQKGFTGPEGLPGPQGPK), 167-469 (LDAK…DGPK), and 502-1442 (GRQG…ATWT). Over residues 176–200 (PGAPGPQGLPGPPGFPGPVGPPGPP) the composition is skewed to pro residues. The span at 202–212 (FFGFPGAMGPR) shows a compositional bias: low complexity. The segment covering 217–231 (HMGERVIGHKGERGV) has biased composition (basic and acidic residues). Residues 242-251 (GTVIVTLTGP) show a composition bias toward low complexity. N-linked (GlcNAc...) asparagine glycosylation occurs at Asn253. Residues 253-266 (NRTDLKGEKGDKGA) are compositionally biased toward basic and acidic residues. The span at 382–394 (SPGSSRPGLRGAP) shows a compositional bias: low complexity. Over residues 402–411 (SKGERGRPGK) the composition is skewed to basic and acidic residues. Positions 415–428 (GTPGSPGCAGSPGL) are enriched in low complexity. Composition is skewed to pro residues over residues 429–438 (PGSPGPPGPP), 598–618 (PGDPGSPGSPGPAGPAGPPGY), and 654–675 (VPGPPGPPGPPGHPGPQGPPGI). The Cell attachment site motif lies at 791–793 (RGD). Over residues 900 to 909 (IGPPGPPGNP) the composition is skewed to pro residues. The segment covering 974 to 987 (VPGMPGLKGLKGLP) has biased composition (low complexity). Residues 996–998 (RGD) carry the Cell attachment site motif. 3 stretches are compositionally biased toward low complexity: residues 1013 to 1025 (IPGSMGNMGMPGS), 1094 to 1105 (LGPAGPEGAPGS), and 1118 to 1133 (HGDLGFKGIKGLLGPP). Positions 1135 to 1148 (IRGPPGLPGFPGSP) are enriched in pro residues. A Cell attachment site motif is present at residues 1154 to 1156 (RGD). 2 stretches are compositionally biased toward low complexity: residues 1230-1250 (PGAIIPGQTGNRGPPGSRGSP) and 1290-1299 (PPGRLGAPGT). A Cell attachment site motif is present at residues 1306–1308 (RGD). Positions 1332 to 1341 (PPGPIGPKGP) are enriched in pro residues. 2 short sequence motifs (cell attachment site) span residues 1345–1347 (RGD) and 1432–1434 (RGD). An epitope recognized by Goodpasture antibodies region spans residues 1427–1444 (GLKGKRGDSGSPATWTTR). A Collagen IV NC1 domain is found at 1445-1669 (GFVFTRHSQT…SRCQVCMKKR (225 aa)). 6 disulfide bridges follow: Cys1460–Cys1551, Cys1493–Cys1548, Cys1505–Cys1511, Cys1570–Cys1665, Cys1604–Cys1662, and Cys1616–Cys1622. The tract at residues 1479-1557 (NQRAHGQDLG…CTVCEGPAIA (79 aa)) is required for the anti-angiogenic activity of tumstatin. Met1533 participates in a covalent cross-link: S-Lysyl-methionine sulfilimine (Met-Lys) (interchain with K-1651). Positions 1610 to 1628 (ASPFLECHGRGTCNYYSNS) are required for the anti-tumor cell activity of tumstatin. An S-Lysyl-methionine sulfilimine (Lys-Met) (interchain with M-1533) cross-link involves residue Lys1651.

It belongs to the type IV collagen family. In terms of assembly, there are six type IV collagen isoforms, alpha 1(IV)-alpha 6(IV), each of which can form a triple helix structure with 2 other chains to generate type IV collagen network. The alpha 3(IV) chain forms a triple helical protomer with alpha 4(IV) and alpha 5(IV); this triple helical structure dimerizes through NC1-NC1 domain interactions such that the alpha 3(IV), alpha 4(IV) and alpha 5(IV) chains of one protomer connect with the alpha 5(IV), alpha 4(IV) and alpha 3(IV) chains of the opposite promoter, respectively. Interacts with ITGB3. Associates with LAMB2 at the neuromuscular junction and in GBM. Post-translationally, prolines at the third position of the tripeptide repeating unit (G-X-Y) are hydroxylated in some or all of the chains. Isoform 2 contains an additional N-linked glycosylation site. In terms of processing, type IV collagens contain numerous cysteine residues which are involved in inter- and intramolecular disulfide bonding. 12 of these, located in the NC1 domain, are conserved in all known type IV collagens. Post-translationally, the trimeric structure of the NC1 domains is stabilized by covalent bonds between Lys and Met residues. Phosphorylated. Thought to be phosphorylated by CERT, but CERT does not have kinase activity. In terms of tissue distribution, alpha 3 and alpha 4 type IV collagens are colocalized and present in kidney, eye, basement membranes of lens capsule, cochlea, lung, skeletal muscle, aorta, synaptic fibers, fetal kidney and fetal lung. PubMed:8083201 reports similar levels of expression of alpha 3 and alpha 4 type IV collagens in kidney, but PubMed:7523402 reports that in kidney levels of alpha 3 type IV collagen are significantly lower than those of alpha 4 type IV collagen. According to PubMed:8083201, alpha 3 type IV collagen is not detected in heart, brain, placenta, liver, pancreas, extrasynaptic muscle fibers, endoneurial and perineurial nerves, fetal brain, fetal heart and fetal liver. According to PubMed:7523402, alpha 3 type IV collagen is strongly expressed in pancreas, neuroretina and calvaria and not expressed in adrenal, ileum and skin. Isoform 1 and isoform 3 are strongly expressed in kidney, lung, suprarenal capsule, muscle and spleen, in each of these tissues isoform 1 is more abundant than isoform 3. Isoform 1 and isoform 3 are expressed at low levels in artery, fat, pericardium and peripherical nerve, but not in placenta, mesangium, skin, pleura and cultured umbilical endothelial cells.

It localises to the secreted. The protein resides in the extracellular space. Its subcellular location is the extracellular matrix. The protein localises to the basement membrane. Type IV collagen is the major structural component of glomerular basement membranes (GBM), forming a 'chicken-wire' meshwork together with laminins, proteoglycans and entactin/nidogen. Functionally, tumstatin, a cleavage fragment corresponding to the collagen alpha 3(IV) NC1 domain, possesses both anti-angiogenic and anti-tumor cell activity; these two anti-tumor properties may be regulated via RGD-independent ITGB3-mediated mechanisms. The sequence is that of Collagen alpha-3(IV) chain (COL4A3) from Homo sapiens (Human).